A 779-amino-acid polypeptide reads, in one-letter code: Angiomotin-like protein 2 (779 aa).

Disordered regions lie at residues 41–215 and 263–308; these read GGAG…QYPH and QYLQ…TSGS. Composition is skewed to basic and acidic residues over residues 100-112 and 141-152; these read KGEELPTYEEAKA and RRQDEALRELRH. Positions 101-307 are required for interaction with CDH5; it reads GEELPTYEEA…SAQASSATSG (207 aa). Tyr-107 is subject to Phosphotyrosine; by FGFR1. Low complexity predominate over residues 160–169; it reads ERLLQLSLER. Residues 177–193 show a composition bias toward polar residues; it reads HMSSSHSFPQLARNQQG. Residues 196–213 are compositionally biased toward pro residues; sequence LRGPPAEGPESRGPPPQY. Residues 220 to 307 form a required for interaction with CDH1 region; sequence HETTTAVTDP…SAQASSATSG (88 aa). The span at 298-308 shows a compositional bias: low complexity; sequence SAQASSATSGS. A coiled-coil region spans residues 308-581; that stretch reads SAHLAQMEAV…KYLEERAMRQ (274 aa). Residues Lys-347 and Lys-408 each participate in a glycyl lysine isopeptide (Lys-Gly) (interchain with G-Cter in ubiquitin) cross-link. 2 disordered regions span residues 522-543 and 679-753; these read RAQQRQAGAPGGSSGSGGSPEL and TQGW…GCSS. Residues 530-539 are compositionally biased toward gly residues; that stretch reads APGGSSGSGG. Composition is skewed to polar residues over residues 680 to 690 and 725 to 740; these read QGWQGLSSSER and DGSTQTEGPPDSTSTC. Phosphoserine occurs at positions 759 and 762. The PDZ-binding motif lies at 776 to 779; sequence EILI.

Belongs to the angiomotin family. Part of a complex composed of AMOTL2, MAGI1 and CDH5, within the complex AMOTL2 acts as a scaffold protein for the interaction of MAGI1 with CDH5. The complex is required for coupling actin fibers to cell junctions in endothelial cells. Within the complex AMOTL2 (via its N-terminus) interacts with CDH5. Interacts (via N-terminus) with MAGI1. Interacts (via N-terminus) with ACTB; the interaction facilitates binding of cell junction complexes to actin fibers in endothelial cells. Interacts with CDH1; the interaction may facilitate binding of radial actin fibers to cell junction complexes. Interacts with SRC. Interacts with YAP1; the interaction is required for ubiquitination of AMOTL2 and localization of YAP1 to tight junctions. Interacts with WWP1; the interaction facilitates WWP1 interaction with the Crumbs complex and subsequent WWP1 translocation to the plasma membrane. WWP1 interaction with the Crumbs complex promotes WWP1 monoubiquitination of AMOTL2 which subsequently activates the Hippo signaling pathway. When ubiquitinated interacts with LATS2 (via UBA domain); the interaction promotes LATS2 phosphorylation of YAP1. Interacts (via PPXY motif) with WWTR1/TAZ (via WW domain); the interaction promotes WWTR1/TAZ localization to the cytoplasm and thereby inhibition of its transcriptional properties. Interacts with PHLDB2; interaction may facilitate PHLDB2 localization to the myotube podosome cortex that surrounds the core. Monoubiquitinated at Lys-347 and Lys-408 by Crumbs complex-bound WWP1. De-ubiquitinated at Lys-347 and Lys-408 by USP9X; the interaction may be promoted by cell contact inhibition. Deubiquitination of AMOTL2 negatively regulates Hippo signaling activation. In terms of processing, phosphorylation at Tyr-107 is necessary for efficient binding to SRC and synergistically functioning with SRC to activate the downstream MAPK pathway.

Its subcellular location is the recycling endosome. It localises to the cytoplasm. The protein resides in the cell projection. It is found in the podosome. The protein localises to the cell junction. Regulates the translocation of phosphorylated SRC to peripheral cell-matrix adhesion sites. Required for proper architecture of actin filaments. Plays a role in coupling actin fibers to cell junctions in endothelial cells and is therefore required for correct endothelial cell morphology via facilitating transcellular transmission of mechanical force resulting in endothelial cell elongation. Required for the anchoring of radial actin fibers to CDH1 junction complexes at the cell membrane which facilitates organization of radial actin fiber structure and cellular response to contractile forces. This contributes to maintenance of cell area, size, shape, epithelial sheet organization and trophectoderm cell properties that facilitate blastocyst zona hatching. Inhibits the Wnt/beta-catenin signaling pathway, probably by recruiting CTNNB1 to recycling endosomes and hence preventing its translocation to the nucleus. Participates in angiogenesis. Activates the Hippo signaling pathway in response to cell contact inhibition via interaction with and ubiquitination by Crumbs complex-bound WWP1. Ubiquitinated AMOTL2 then interacts with LATS2 which in turn phosphorylates YAP1, excluding it from the nucleus and localizing it to the cytoplasm and tight junctions, therefore ultimately repressing YAP1-driven transcription of target genes. Acts to inhibit WWTR1/TAZ transcriptional coactivator activity via sequestering WWTR1/TAZ in the cytoplasm and at tight junctions. Regulates the size and protein composition of the podosome cortex and core at myofibril neuromuscular junctions. Selectively promotes FGF-induced MAPK activation through SRC. May play a role in the polarity, proliferation and migration of endothelial cells. The chain is Angiomotin-like protein 2 from Homo sapiens (Human).